A 70-amino-acid polypeptide reads, in one-letter code: LSCYLGYKHSQTCPPGENVCFVKTWCDGFCNTRGERIIMGCAATCPTAKSGVHIACCSTDNCNIYAKWGS.

Disulfide bonds link Cys-3–Cys-20, Cys-13–Cys-41, Cys-26–Cys-30, Cys-45–Cys-56, and Cys-57–Cys-62. Ser-70 is modified (serine amide).

It belongs to the three-finger toxin family. Long-chain subfamily. Type II alpha-neurotoxin sub-subfamily. In terms of tissue distribution, expressed by the venom gland.

Its subcellular location is the secreted. Binds with high affinity to muscular (alpha-1/CHRNA1) and neuronal (alpha-7/CHRNA7) nicotinic acetylcholine receptor (nAChR) and inhibits acetylcholine from binding to the receptor, thereby impairing neuromuscular and neuronal transmission. This is Alpha-elapitoxin-Ast2a from Hydrophis stokesii (Stokes's sea snake).